The chain runs to 50 residues: Large ribosomal subunit protein eL39 (50 aa).

Belongs to the eukaryotic ribosomal protein eL39 family.

The protein is Large ribosomal subunit protein eL39 of Methanosphaerula palustris (strain ATCC BAA-1556 / DSM 19958 / E1-9c).